The following is a 414-amino-acid chain: Mini-circle putative transposase for IS117 (414 aa).

The sequence is that of Mini-circle putative transposase for IS117 from Streptomyces coelicolor (strain ATCC BAA-471 / A3(2) / M145).